Consider the following 299-residue polypeptide: Proline iminopeptidase (299 aa).

Positions 26-272 (VLLLAGGPGF…QFLYCANGSH (247 aa)) constitute an AB hydrolase-1 domain. Residue serine 103 is the Nucleophile of the active site. Aspartate 245 is a catalytic residue. Histidine 272 serves as the catalytic Proton donor.

This sequence belongs to the peptidase S33 family. In terms of assembly, monomer.

It catalyses the reaction Release of N-terminal proline from a peptide.. In terms of biological role, releases the N-terminal proline from various substrates. The sequence is that of Proline iminopeptidase from Chitinophaga pinensis (strain ATCC 43595 / DSM 2588 / LMG 13176 / NBRC 15968 / NCIMB 11800 / UQM 2034).